Reading from the N-terminus, the 442-residue chain is UPF0489 protein C5orf22 (442 aa).

The segment at 175–210 (SSAKKPKLALEDSENTASTNCDSSSEGLEKDTATQR) is disordered. The segment covering 189–200 (NTASTNCDSSSE) has biased composition (polar residues).

This sequence belongs to the UPF0489 family.

The protein is UPF0489 protein C5orf22 (C5orf22) of Homo sapiens (Human).